A 367-amino-acid polypeptide reads, in one-letter code: Serine O-succinyltransferase (367 aa).

Residues 41-351 (NAVLILTGLS…SPQGHDAFLV (311 aa)) enclose the AB hydrolase-1 domain. Residues 48–51 (GLSP) form an important for substrate specificity region. Catalysis depends on Ser-146, which acts as the Nucleophile. Arg-215 lines the substrate pocket. Active-site residues include Asp-313 and His-346. Residue Asp-347 participates in substrate binding.

Belongs to the AB hydrolase superfamily. MetX family. In terms of assembly, homodimer.

It is found in the cytoplasm. It catalyses the reaction succinyl-CoA + L-serine = O-succinyl-L-serine + CoA. The catalysed reaction is L-homoserine + succinyl-CoA = O-succinyl-L-homoserine + CoA. It functions in the pathway amino-acid biosynthesis; L-cysteine biosynthesis; L-cysteine from L-serine: step 1/2. Functionally, transfers a succinyl group from succinyl-CoA to L-serine, forming succinyl-L-serine. In vitro, also has homoserine succinyl transferase activity. This chain is Serine O-succinyltransferase, found in Frateuria aurantia (strain ATCC 33424 / DSM 6220 / KCTC 2777 / LMG 1558 / NBRC 3245 / NCIMB 13370) (Acetobacter aurantius).